The chain runs to 344 residues: Arginine N-succinyltransferase (344 aa).

Leu125 lines the succinyl-CoA pocket. His229 acts as the Proton donor in catalysis.

Belongs to the arginine N-succinyltransferase family.

The enzyme catalyses succinyl-CoA + L-arginine = N(2)-succinyl-L-arginine + CoA + H(+). The protein operates within amino-acid degradation; L-arginine degradation via AST pathway; L-glutamate and succinate from L-arginine: step 1/5. Functionally, catalyzes the transfer of succinyl-CoA to arginine to produce N(2)-succinylarginine. The chain is Arginine N-succinyltransferase from Escherichia coli O6:H1 (strain CFT073 / ATCC 700928 / UPEC).